Reading from the N-terminus, the 478-residue chain is Probable glucan endo-1,3-beta-glucosidase A6 (478 aa).

A signal peptide spans 1 to 20; sequence MSLLAFFLFTILVFSSSCCS. Catalysis depends on Glu-135, which acts as the Proton donor. Catalysis depends on Glu-280, which acts as the Nucleophile. Cys-390 and Cys-453 are joined by a disulfide.

The protein belongs to the glycosyl hydrolase 17 family. In terms of processing, contains two additional disulfide bonds, but it is unclear if they are between the pairs Cys-409-Cys-416 and Cys-425-Cys-471 or between the pairs Cys-409-Cys-471 and Cys-416-Cys-425. Anthers.

It catalyses the reaction Hydrolysis of (1-&gt;3)-beta-D-glucosidic linkages in (1-&gt;3)-beta-D-glucans.. Probable beta-1,3-glucanase that may be involved in the degradation of callose walls around the microspore tetrad during pollen development. May be required for pollen exine formation. The chain is Probable glucan endo-1,3-beta-glucosidase A6 from Arabidopsis thaliana (Mouse-ear cress).